Consider the following 520-residue polypeptide: Peptide chain release factor 3 (520 aa).

In terms of domain architecture, tr-type G spans 8-273 (EIRKTFAIIS…AYVDHAPMPS (266 aa)). Residues 17-24 (SHPDAGKT), 85-89 (DTPGH), and 139-142 (NKLD) contribute to the GTP site.

This sequence belongs to the TRAFAC class translation factor GTPase superfamily. Classic translation factor GTPase family. PrfC subfamily.

The protein localises to the cytoplasm. Functionally, increases the formation of ribosomal termination complexes and stimulates activities of RF-1 and RF-2. It binds guanine nucleotides and has strong preference for UGA stop codons. It may interact directly with the ribosome. The stimulation of RF-1 and RF-2 is significantly reduced by GTP and GDP, but not by GMP. This Macrococcus caseolyticus (strain JCSC5402) (Macrococcoides caseolyticum) protein is Peptide chain release factor 3.